We begin with the raw amino-acid sequence, 387 residues long: Protein WHAT'S THIS FACTOR 9, mitochondrial (387 aa).

The transit peptide at 1–24 (MLSIRRHAKTVASSCTNLTQKRTY) directs the protein to the mitochondrion. The PORR domain occupies 32-358 (KRDPYFDNIE…KKYIQLMKNS (327 aa)).

The protein resides in the mitochondrion. Functionally, RNA-binding protein involved in group II intron splicing. Binds specific group II introns and promotes their splicing (e.g. rpl2 and ccmFC). This chain is Protein WHAT'S THIS FACTOR 9, mitochondrial, found in Arabidopsis thaliana (Mouse-ear cress).